Here is a 229-residue protein sequence, read N- to C-terminus: Endo-1,4-beta-xylanase 1 (229 aa).

The N-terminal stretch at 1 to 19 is a signal peptide; that stretch reads MVAFSSLICALTSIASTLA. Positions 20–51 are excised as a propeptide; it reads MPTGLEPESSVNVTERGMYDFVLGAHNDHRRR. Asparagine 31 carries N-linked (GlcNAc...) asparagine glycosylation. The region spanning 42 to 228 is the GH11 domain; sequence LGAHNDHRRR…GSGSASQSVS (187 aa). Tyrosine 117 lines the substrate pocket. Glutamate 126 serves as the catalytic Nucleophile. Positions 128, 160, 164, 174, and 209 each coordinate substrate. The Proton donor role is filled by glutamate 215.

It belongs to the glycosyl hydrolase 11 (cellulase G) family.

It is found in the secreted. It catalyses the reaction Endohydrolysis of (1-&gt;4)-beta-D-xylosidic linkages in xylans.. Its pathway is glycan degradation; xylan degradation. Glycoside hydrolase involved in the hydrolysis of xylan, a major plant cell wall hemicellulose made up of 1,4-beta-linked D-xylopyranose residues. Catalyzes the endohydrolysis of the main-chain 1,4-beta-glycosidic bonds connecting the xylose subunits yielding various xylooligosaccharides and xylose. The chain is Endo-1,4-beta-xylanase 1 from Hypocrea jecorina (strain QM6a) (Trichoderma reesei).